A 734-amino-acid polypeptide reads, in one-letter code: Photosystem I P700 chlorophyll a apoprotein A2 (734 aa).

The next 8 helical transmembrane spans lie at 46–69 (IFASHFGQLAVIFLWTSGNLFHVA), 135–158 (LYTGALFLLAVSAVALVAGWLHLQ), 175–199 (LNHHLSGLFGVSSLAWTGHLVHVAI), 273–291 (IAHHHLAIAVLFIVAGHMY), 330–353 (LHFQLGLALASLGVITSLVAQHMY), 369–395 (AALYTHHQYIAGFIMTGAFAHGAIFFI), 417–439 (AIISHLSWASLFLGFHTLGLYVH), and 517–535 (FLVHHAIALGLHTTTLILV). Residues cysteine 559 and cysteine 568 each contribute to the [4Fe-4S] cluster site. 2 helical membrane passes run 575-596 (AFYLAVFWMLNTIGWVTFYWHW) and 643-665 (LSVWAWMFLFGHLVWATGFMFLI). The chlorophyll a site is built by histidine 654, methionine 662, and tyrosine 670. Tryptophan 671 lines the phylloquinone pocket. Residues 707-727 (LVGLAHFSVGYIFTYAAFLIA) traverse the membrane as a helical segment.

It belongs to the PsaA/PsaB family. The PsaA/B heterodimer binds the P700 chlorophyll special pair and subsequent electron acceptors. PSI consists of a core antenna complex that captures photons, and an electron transfer chain that converts photonic excitation into a charge separation. The eukaryotic PSI reaction center is composed of at least 11 subunits. The cofactor is P700 is a chlorophyll a/chlorophyll a' dimer, A0 is one or more chlorophyll a, A1 is one or both phylloquinones and FX is a shared 4Fe-4S iron-sulfur center..

The protein resides in the plastid. It localises to the chloroplast thylakoid membrane. The enzyme catalyses reduced [plastocyanin] + hnu + oxidized [2Fe-2S]-[ferredoxin] = oxidized [plastocyanin] + reduced [2Fe-2S]-[ferredoxin]. Functionally, psaA and PsaB bind P700, the primary electron donor of photosystem I (PSI), as well as the electron acceptors A0, A1 and FX. PSI is a plastocyanin-ferredoxin oxidoreductase, converting photonic excitation into a charge separation, which transfers an electron from the donor P700 chlorophyll pair to the spectroscopically characterized acceptors A0, A1, FX, FA and FB in turn. Oxidized P700 is reduced on the lumenal side of the thylakoid membrane by plastocyanin. This is Photosystem I P700 chlorophyll a apoprotein A2 from Zygnema circumcarinatum (Green alga).